A 507-amino-acid polypeptide reads, in one-letter code: ATP synthase subunit beta (507 aa).

The disordered stretch occupies residues 1–22 (MSGLASKAKSRVKSSKGKNSTN). 183 to 190 (GGAGVGKT) lines the ATP pocket.

This sequence belongs to the ATPase alpha/beta chains family. F-type ATPases have 2 components, CF(1) - the catalytic core - and CF(0) - the membrane proton channel. CF(1) has five subunits: alpha(3), beta(3), gamma(1), delta(1), epsilon(1). CF(0) has three main subunits: a(1), b(2) and c(9-12). The alpha and beta chains form an alternating ring which encloses part of the gamma chain. CF(1) is attached to CF(0) by a central stalk formed by the gamma and epsilon chains, while a peripheral stalk is formed by the delta and b chains.

It is found in the cell inner membrane. It carries out the reaction ATP + H2O + 4 H(+)(in) = ADP + phosphate + 5 H(+)(out). Its function is as follows. Produces ATP from ADP in the presence of a proton gradient across the membrane. The catalytic sites are hosted primarily by the beta subunits. This is ATP synthase subunit beta from Ehrlichia chaffeensis (strain ATCC CRL-10679 / Arkansas).